Here is a 277-residue protein sequence, read N- to C-terminus: Energy-coupling factor transporter ATP-binding protein EcfA1 (277 aa).

The 238-residue stretch at Val5–Asp242 folds into the ABC transporter domain. Gly41–Ser48 provides a ligand contact to ATP.

This sequence belongs to the ABC transporter superfamily. Energy-coupling factor EcfA family. Forms a stable energy-coupling factor (ECF) transporter complex composed of 2 membrane-embedded substrate-binding proteins (S component), 2 ATP-binding proteins (A component) and 2 transmembrane proteins (T component).

The protein localises to the cell membrane. Functionally, ATP-binding (A) component of a common energy-coupling factor (ECF) ABC-transporter complex. Unlike classic ABC transporters this ECF transporter provides the energy necessary to transport a number of different substrates. The polypeptide is Energy-coupling factor transporter ATP-binding protein EcfA1 (Clostridioides difficile (strain 630) (Peptoclostridium difficile)).